The primary structure comprises 279 residues: Aspartate/glutamate leucyltransferase (279 aa).

Residues 245–279 are disordered; sequence ARERGARPPRGPGALKDACDLPLSDAQPADIEDLD.

Belongs to the R-transferase family. Bpt subfamily.

It localises to the cytoplasm. The catalysed reaction is N-terminal L-glutamyl-[protein] + L-leucyl-tRNA(Leu) = N-terminal L-leucyl-L-glutamyl-[protein] + tRNA(Leu) + H(+). The enzyme catalyses N-terminal L-aspartyl-[protein] + L-leucyl-tRNA(Leu) = N-terminal L-leucyl-L-aspartyl-[protein] + tRNA(Leu) + H(+). Functions in the N-end rule pathway of protein degradation where it conjugates Leu from its aminoacyl-tRNA to the N-termini of proteins containing an N-terminal aspartate or glutamate. This chain is Aspartate/glutamate leucyltransferase, found in Caulobacter vibrioides (strain ATCC 19089 / CIP 103742 / CB 15) (Caulobacter crescentus).